Reading from the N-terminus, the 421-residue chain is uncharacterized protein (421 aa).

Lys249 is modified (N6-(pyridoxal phosphate)lysine).

The protein belongs to the class-I pyridoxal-phosphate-dependent aminotransferase family. The cofactor is pyridoxal 5'-phosphate.

Its subcellular location is the cytoplasm. This is an uncharacterized protein from Schizosaccharomyces pombe (strain 972 / ATCC 24843) (Fission yeast).